Here is a 308-residue protein sequence, read N- to C-terminus: uncharacterized protein (308 aa).

A run of 10 helical transmembrane segments spans residues 6–26 (VVLI…FGIL), 31–51 (AKIL…FLTI), 63–83 (FLKL…LAYL), 100–120 (ILVS…LGMF), 128–148 (AIFC…YVGI), 162–182 (MAKF…FFGF), 195–215 (LNYL…LSLS), 221–241 (FGVF…PATA), 257–277 (VLLV…GTLY), and 287–307 (SIFI…WILL).

Belongs to the auxin efflux carrier (TC 2.A.69) family.

Its subcellular location is the cell membrane. This is an uncharacterized protein from Methanocaldococcus jannaschii (strain ATCC 43067 / DSM 2661 / JAL-1 / JCM 10045 / NBRC 100440) (Methanococcus jannaschii).